Reading from the N-terminus, the 406-residue chain is Cysteine desulfurase (406 aa).

N6-(pyridoxal phosphate)lysine is present on Lys-226. Cys-364 serves as the catalytic Cysteine persulfide intermediate.

It belongs to the class-V pyridoxal-phosphate-dependent aminotransferase family. Csd subfamily. As to quaternary structure, homodimer. Interacts with SufE and the SufBCD complex composed of SufB, SufC and SufD. The interaction with SufE is required to mediate the direct transfer of the sulfur atom from the S-sulfanylcysteine. Pyridoxal 5'-phosphate is required as a cofactor.

It localises to the cytoplasm. It catalyses the reaction (sulfur carrier)-H + L-cysteine = (sulfur carrier)-SH + L-alanine. It carries out the reaction L-selenocysteine + AH2 = hydrogenselenide + L-alanine + A + H(+). The protein operates within cofactor biosynthesis; iron-sulfur cluster biosynthesis. Its function is as follows. Cysteine desulfurases mobilize the sulfur from L-cysteine to yield L-alanine, an essential step in sulfur metabolism for biosynthesis of a variety of sulfur-containing biomolecules. Component of the suf operon, which is activated and required under specific conditions such as oxidative stress and iron limitation. Acts as a potent selenocysteine lyase in vitro, that mobilizes selenium from L-selenocysteine. Selenocysteine lyase activity is however unsure in vivo. The sequence is that of Cysteine desulfurase from Klebsiella pneumoniae subsp. pneumoniae (strain ATCC 700721 / MGH 78578).